The primary structure comprises 120 residues: Basic phospholipase A2 homolog piratoxin-3 (120 aa).

7 disulfides stabilise this stretch: Cys26-Cys113, Cys28-Cys44, Cys43-Cys94, Cys49-Cys120, Cys50-Cys87, Cys57-Cys81, and Cys75-Cys85. Residues 104-115 (KKYRYHLKPCKK) form an important for membrane-damaging activities in eukaryotes and bacteria; heparin-binding region.

This sequence belongs to the phospholipase A2 family. Group II subfamily. D49 sub-subfamily. In terms of assembly, homodimer; non-covalently linked (probable alternative/compact dimer conformation). In terms of tissue distribution, expressed by the venom gland.

The protein localises to the secreted. Its function is as follows. Snake venom phospholipase A2 (PLA2) that lacks enzymatic activity. Shows high myotoxin activities. Also has anticoagulant activity. A model of myotoxic mechanism has been proposed: an apo Lys49-PLA2 is activated by the entrance of a hydrophobic molecule (e.g. fatty acid) at the hydrophobic channel of the protein leading to a reorientation of a monomer. This reorientation causes a transition between 'inactive' to 'active' states, causing alignment of C-terminal and membrane-docking sites (MDoS) side-by-side and putting the membrane-disruption sites (MDiS) in the same plane, exposed to solvent and in a symmetric position for both monomers. The MDoS region stabilizes the toxin on membrane by the interaction of charged residues with phospholipid head groups. Subsequently, the MDiS region destabilizes the membrane with penetration of hydrophobic residues. This insertion causes a disorganization of the membrane, allowing an uncontrolled influx of ions (i.e. calcium and sodium), and eventually triggering irreversible intracellular alterations and cell death. In Bothrops pirajai (Piraja's lancehead), this protein is Basic phospholipase A2 homolog piratoxin-3.